A 146-amino-acid polypeptide reads, in one-letter code: UPF0178 protein OB0454 (146 aa).

This sequence belongs to the UPF0178 family.

The chain is UPF0178 protein OB0454 from Oceanobacillus iheyensis (strain DSM 14371 / CIP 107618 / JCM 11309 / KCTC 3954 / HTE831).